Consider the following 271-residue polypeptide: MVTMKDLLECGVHFGHQTRRWNPKMKKYIFGVRKNIHIIDLQKTLRYFRYTYNVVRDAAAEGKTVMFVGTKKQASETIKQYADTINAPYVNYRWLGGMLTNFSTIKKSIRKLEVIEEMEASGQIELLTKKEKLMLTRKKEKLEKYLGGVRHMKKAPDMLFVVDAAKEKIAVAEARRLGIPVVAPLDTNCDPDVVDFPIPGNDDAIRSIQLFCKEMAEAIQEGRALAGSEEGEATEEVTPASEAEKQEVLAEAMSEEGDALQESEVVEEEEK.

Residues 223–271 (RALAGSEEGEATEEVTPASEAEKQEVLAEAMSEEGDALQESEVVEEEEK) form a disordered region. Positions 253–271 (MSEEGDALQESEVVEEEEK) are enriched in acidic residues.

This sequence belongs to the universal ribosomal protein uS2 family.

In Wolinella succinogenes (strain ATCC 29543 / DSM 1740 / CCUG 13145 / JCM 31913 / LMG 7466 / NCTC 11488 / FDC 602W) (Vibrio succinogenes), this protein is Small ribosomal subunit protein uS2.